The primary structure comprises 495 residues: Acetyl-coenzyme A carboxylase carboxyl transferase subunit beta, chloroplastic (495 aa).

A disordered region spans residues 187-208 (ESRNSSENEGSSRRTRTKGSDL). Positions 226–495 (LWVQCENCYG…PLNQKSSKIK (270 aa)) constitute a CoA carboxyltransferase N-terminal domain. Cysteine 230, cysteine 233, cysteine 249, and cysteine 252 together coordinate Zn(2+). The segment at 230-252 (CENCYGLNYKKFLKSKMNICEQC) adopts a C4-type zinc-finger fold.

The protein belongs to the AccD/PCCB family. Acetyl-CoA carboxylase is a heterohexamer composed of biotin carboxyl carrier protein, biotin carboxylase and 2 subunits each of ACCase subunit alpha and ACCase plastid-coded subunit beta (accD). Zn(2+) is required as a cofactor. RNA expressed in leaf, root and stem; the least expression occurs in stems.

It localises to the plastid. The protein resides in the chloroplast stroma. It carries out the reaction N(6)-carboxybiotinyl-L-lysyl-[protein] + acetyl-CoA = N(6)-biotinyl-L-lysyl-[protein] + malonyl-CoA. The protein operates within lipid metabolism; malonyl-CoA biosynthesis; malonyl-CoA from acetyl-CoA: step 1/1. Functionally, component of the acetyl coenzyme A carboxylase (ACC) complex. Biotin carboxylase (BC) catalyzes the carboxylation of biotin on its carrier protein (BCCP) and then the CO(2) group is transferred by the transcarboxylase to acetyl-CoA to form malonyl-CoA. This chain is Acetyl-coenzyme A carboxylase carboxyl transferase subunit beta, chloroplastic, found in Nicotiana tabacum (Common tobacco).